We begin with the raw amino-acid sequence, 275 residues long: Release factor glutamine methyltransferase (275 aa).

S-adenosyl-L-methionine contacts are provided by residues 114 to 118 (GTGSG), aspartate 137, tryptophan 165, and asparagine 180. 180–183 (NPPY) serves as a coordination point for substrate.

It belongs to the protein N5-glutamine methyltransferase family. PrmC subfamily.

It catalyses the reaction L-glutaminyl-[peptide chain release factor] + S-adenosyl-L-methionine = N(5)-methyl-L-glutaminyl-[peptide chain release factor] + S-adenosyl-L-homocysteine + H(+). Methylates the class 1 translation termination release factors RF1/PrfA and RF2/PrfB on the glutamine residue of the universally conserved GGQ motif. The chain is Release factor glutamine methyltransferase from Xylella fastidiosa (strain 9a5c).